A 432-amino-acid chain; its full sequence is MMFKKCLSVLFTCLIFISSARAQLVIEITSGADQLLPIAVVPFGYEGVDALPEDIAQIVEADLARSGLFQPIPRSNMLSMPSKEADVFYRDWRLLKSDYVVIGAIKKLPNNQYRIGFELLNVLSQKPVQKHSSIDVSARNFRDAAHYISDKVYELLTGTRGAFSTRILYVTAEGDKKAPLFKLQVADADGHRPQVVVESKEPILSPSWSMDGRKIAYVMFRNRRPNIFIQELATGKRQQIAQFRGLNGAPAWSPDGKKLALVLSKDNNPEIYTLDIATQKLERMTNHYAIDTEPSWEPDGKGIVFTSDRGGNPQIYRLDVNSKRVERVTFEGDLNTRARMTPDGRYLVTVQKNDGNYHIALQDMKTGRVQILTETYLDESPSIAPNGSMVMYATTYQGKGILAVVSVDGLVKYRLPSADGDVREPSWSPYFK.

Positions 1–22 (MMFKKCLSVLFTCLIFISSARA) are cleaved as a signal peptide.

Belongs to the TolB family. The Tol-Pal system is composed of five core proteins: the inner membrane proteins TolA, TolQ and TolR, the periplasmic protein TolB and the outer membrane protein Pal. They form a network linking the inner and outer membranes and the peptidoglycan layer.

The protein localises to the periplasm. In terms of biological role, part of the Tol-Pal system, which plays a role in outer membrane invagination during cell division and is important for maintaining outer membrane integrity. This is Tol-Pal system protein TolB from Marinomonas sp. (strain MWYL1).